A 716-amino-acid polypeptide reads, in one-letter code: DNA ligase (716 aa).

Residues 49-53 (DAAYD), 98-99 (SL), and E132 contribute to the NAD(+) site. The active-site N6-AMP-lysine intermediate is the K134. NAD(+) contacts are provided by R155, E192, K308, and K332. Zn(2+) contacts are provided by C437, C439, C461, and C467. One can recognise a BRCT domain in the interval 638-716 (KRNSPIATKT…EDEWLQLIGE (79 aa)).

The protein belongs to the NAD-dependent DNA ligase family. LigA subfamily. The cofactor is Mg(2+). Mn(2+) serves as cofactor.

The catalysed reaction is NAD(+) + (deoxyribonucleotide)n-3'-hydroxyl + 5'-phospho-(deoxyribonucleotide)m = (deoxyribonucleotide)n+m + AMP + beta-nicotinamide D-nucleotide.. Functionally, DNA ligase that catalyzes the formation of phosphodiester linkages between 5'-phosphoryl and 3'-hydroxyl groups in double-stranded DNA using NAD as a coenzyme and as the energy source for the reaction. It is essential for DNA replication and repair of damaged DNA. The sequence is that of DNA ligase from Bradyrhizobium sp. (strain ORS 278).